Here is a 61-residue protein sequence, read N- to C-terminus: Large ribosomal subunit protein uL30 (61 aa).

Belongs to the universal ribosomal protein uL30 family. In terms of assembly, part of the 50S ribosomal subunit.

This is Large ribosomal subunit protein uL30 from Chlorobaculum tepidum (strain ATCC 49652 / DSM 12025 / NBRC 103806 / TLS) (Chlorobium tepidum).